The chain runs to 153 residues: DNA gyrase inhibitor (153 aa).

This sequence belongs to the DNA gyrase inhibitor family. As to quaternary structure, interacts with DNA gyrase.

Its subcellular location is the cytoplasm. In terms of biological role, inhibits the supercoiling activity of DNA gyrase. Acts by inhibiting DNA gyrase at an early step, prior to (or at the step of) binding of DNA by the gyrase. It protects cells against toxins that target DNA gyrase, by inhibiting activity of these toxins and reducing the formation of lethal double-strand breaks in the cell. In Pantoea sp. (strain At-9b), this protein is DNA gyrase inhibitor.